We begin with the raw amino-acid sequence, 118 residues long: Large ribosomal subunit protein uL18 (118 aa).

It belongs to the universal ribosomal protein uL18 family. Part of the 50S ribosomal subunit; part of the 5S rRNA/L5/L18/L25 subcomplex. Contacts the 5S and 23S rRNAs.

Functionally, this is one of the proteins that bind and probably mediate the attachment of the 5S RNA into the large ribosomal subunit, where it forms part of the central protuberance. This Rickettsia typhi (strain ATCC VR-144 / Wilmington) protein is Large ribosomal subunit protein uL18.